The following is a 142-amino-acid chain: MNVPSSAERWRSAMLYAWVSAGSVVGGLTRYLVGLALDTGPGFPFATLFINATGSLIIGFYATLTGPDGRMLARPEHRQFVMTGFCGGYTTFSAFSLETFRLFHGGMKYIALAYVASSVVCWLVSVWLGHIMASRYNRLKRS.

Helical transmembrane passes span 17–37 (AWVS…GLAL), 42–62 (GFPF…GFYA), 80–100 (FVMT…LETF), and 109–129 (YIAL…VWLG). Residues glycine 87 and threonine 90 each contribute to the Na(+) site.

The protein belongs to the fluoride channel Fluc/FEX (TC 1.A.43) family.

Its subcellular location is the cell inner membrane. It catalyses the reaction fluoride(in) = fluoride(out). Na(+) is not transported, but it plays an essential structural role and its presence is essential for fluoride channel function. In terms of biological role, fluoride-specific ion channel. Important for reducing fluoride concentration in the cell, thus reducing its toxicity. This chain is Fluoride-specific ion channel FluC 1, found in Bradyrhizobium diazoefficiens (strain JCM 10833 / BCRC 13528 / IAM 13628 / NBRC 14792 / USDA 110).